The primary structure comprises 439 residues: Serine hydroxymethyltransferase (439 aa).

Residues Leu134 and 138 to 140 (GHL) each bind (6S)-5,6,7,8-tetrahydrofolate. At Lys243 the chain carries N6-(pyridoxal phosphate)lysine.

This sequence belongs to the SHMT family. Homodimer. It depends on pyridoxal 5'-phosphate as a cofactor.

The protein localises to the cytoplasm. The catalysed reaction is (6R)-5,10-methylene-5,6,7,8-tetrahydrofolate + glycine + H2O = (6S)-5,6,7,8-tetrahydrofolate + L-serine. It participates in one-carbon metabolism; tetrahydrofolate interconversion. The protein operates within amino-acid biosynthesis; glycine biosynthesis; glycine from L-serine: step 1/1. Functionally, catalyzes the reversible interconversion of serine and glycine with tetrahydrofolate (THF) serving as the one-carbon carrier. This reaction serves as the major source of one-carbon groups required for the biosynthesis of purines, thymidylate, methionine, and other important biomolecules. Also exhibits THF-independent aldolase activity toward beta-hydroxyamino acids, producing glycine and aldehydes, via a retro-aldol mechanism. This Brucella anthropi (strain ATCC 49188 / DSM 6882 / CCUG 24695 / JCM 21032 / LMG 3331 / NBRC 15819 / NCTC 12168 / Alc 37) (Ochrobactrum anthropi) protein is Serine hydroxymethyltransferase.